Reading from the N-terminus, the 459-residue chain is tRNA modification GTPase MnmE (459 aa).

(6S)-5-formyl-5,6,7,8-tetrahydrofolate is bound by residues R29, E91, and R130. A TrmE-type G domain is found at 225–381 (GVKVAIVGRP…LEEALEQLVT (157 aa)). Residue N235 participates in K(+) binding. Residues 235 to 240 (NVGKSS), 254 to 260 (TDLPGTT), and 279 to 282 (DTAG) each bind GTP. S239 is a Mg(2+) binding site. Positions 254, 256, and 259 each coordinate K(+). Residue T260 coordinates Mg(2+). Position 459 (K459) interacts with (6S)-5-formyl-5,6,7,8-tetrahydrofolate.

The protein belongs to the TRAFAC class TrmE-Era-EngA-EngB-Septin-like GTPase superfamily. TrmE GTPase family. In terms of assembly, homodimer. Heterotetramer of two MnmE and two MnmG subunits. It depends on K(+) as a cofactor.

It localises to the cytoplasm. Its function is as follows. Exhibits a very high intrinsic GTPase hydrolysis rate. Involved in the addition of a carboxymethylaminomethyl (cmnm) group at the wobble position (U34) of certain tRNAs, forming tRNA-cmnm(5)s(2)U34. This Synechococcus sp. (strain JA-3-3Ab) (Cyanobacteria bacterium Yellowstone A-Prime) protein is tRNA modification GTPase MnmE.